Here is a 363-residue protein sequence, read N- to C-terminus: Putative F-box protein At4g22170 (363 aa).

An F-box domain is found at 7–58; it reads PNSWSDLPHDLLNLVFERLSFANFNRARSVCSSWYSASRQSVPKNQIHWLIL.

The protein is Putative F-box protein At4g22170 of Arabidopsis thaliana (Mouse-ear cress).